Consider the following 327-residue polypeptide: MGNVFDYEDIQLIPAKCIVNSRSECDTTVTLGKHKFKLPVVPANMQTIIDERIATYLAENNYFYIMHRFQPEKRISFIRDMQSRGLIASISVGVKEDEYEFVQQLAAEHLTPEYITIDIAHGHSNAVINMIQHIKKHLPESFVIAGNVGTPEAVRELENAGADATKVGIGPGKVCITKIKTGFGTGGWQLAALRWCAKAASKPIIADGGIRTNGDVAKSIRFGATMVMIGSLFAGHEESPGETIEKDGKLYKEYFGSASEFQKGEKKNVEGKKMFVEHKGSLEDTLIEMEQDLQSSISYAGGTKLDSIRTVDYVVVKNSIFNGDKVY.

Cys-175 functions as the Thioimidate intermediate in the catalytic mechanism. 204–227 (IIADGGIRTNGDVAKSIRFGATMV) is an NADP(+) binding site.

It belongs to the IMPDH/GMPR family. GuaC type 2 subfamily.

It carries out the reaction IMP + NH4(+) + NADP(+) = GMP + NADPH + 2 H(+). In terms of biological role, catalyzes the irreversible NADPH-dependent deamination of GMP to IMP. It functions in the conversion of nucleobase, nucleoside and nucleotide derivatives of G to A nucleotides, and in maintaining the intracellular balance of A and G nucleotides. This Bacillus anthracis protein is GMP reductase.